The primary structure comprises 249 residues: Ciliogenesis and planar polarity effector 2 (249 aa).

Residues Pro-46 to Glu-249 are small GTPase-like. GTP contacts are provided by residues Gly-58–Thr-65 and Thr-171–Asp-174.

Belongs to the small GTPase superfamily. Rab family. As to quaternary structure, interacts with fuz.

The protein resides in the cytoplasm. It localises to the cytoskeleton. The protein localises to the cilium basal body. Its function is as follows. Potential effector of the planar cell polarity signaling pathway. Plays a role in targeted membrane trafficking most probably at the level of vesicle fusion with membranes. Involved in cilium biogenesis by regulating the transport of cargo proteins to the basal body and to the apical tips of cilia. More generally involved in exocytosis in secretory cells. In Xenopus laevis (African clawed frog), this protein is Ciliogenesis and planar polarity effector 2.